Reading from the N-terminus, the 86-residue chain is MKTLLLTLVVVTIVCLALGYTLTCLICPEKYCNKVHTCLNGEKICFKKYDQRKLLGKRYIRGCADTCPVRKPREIVECCSTDKCNH.

The first 21 residues, 1–21 (MKTLLLTLVVVTIVCLALGYT), serve as a signal peptide directing secretion. Cystine bridges form between Cys24/Cys45, Cys27/Cys32, Cys38/Cys63, Cys67/Cys78, and Cys79/Cys84.

It belongs to the three-finger toxin family. Ancestral subfamily. Orphan group II sub-subfamily. Expressed by the venom gland.

It is found in the secreted. Its function is as follows. Binds with low affinity and weakly inhibits muscle nicotinic acetylcholine receptor (nAChR). The protein is Long neurotoxin homolog of Naja atra (Chinese cobra).